A 320-amino-acid chain; its full sequence is L-lactate dehydrogenase (320 aa).

Residues V18, D39, R44, Y69, and 83–84 (GA) contribute to the NAD(+) site. 2 residues coordinate substrate: Q86 and R92. Residues T105, 122 to 124 (AAN), and S147 each bind NAD(+). 124 to 127 (NPVD) provides a ligand contact to substrate. Position 152 to 155 (152 to 155 (DSAR)) interacts with substrate. The Proton acceptor role is filled by H179. Y223 is modified (phosphotyrosine). A substrate-binding site is contributed by T232.

It belongs to the LDH/MDH superfamily. LDH family. In terms of assembly, homotetramer.

It localises to the cytoplasm. The enzyme catalyses (S)-lactate + NAD(+) = pyruvate + NADH + H(+). Its pathway is fermentation; pyruvate fermentation to lactate; (S)-lactate from pyruvate: step 1/1. Its function is as follows. Catalyzes the conversion of lactate to pyruvate. This chain is L-lactate dehydrogenase, found in Pediococcus pentosaceus (strain ATCC 25745 / CCUG 21536 / LMG 10740 / 183-1w).